We begin with the raw amino-acid sequence, 473 residues long: Glucose-1-phosphate adenylyltransferase small subunit, chloroplastic/amyloplastic (473 aa).

The disordered stretch occupies residues 1 to 36 (MDVPLASKTFPSPSPSKREQCNIDGHKSSSKHADLN). Positions 16 to 36 (SKREQCNIDGHKSSSKHADLN) are enriched in basic and acidic residues.

The protein belongs to the bacterial/plant glucose-1-phosphate adenylyltransferase family. As to quaternary structure, heterotetramer. Abundantly expressed in the whole grains, a slightly less abundant expression is seen in leaves, while a low level expression is seen in the roots. A greater expression is seen in the endosperm than in the embryo and pericarp layers.

It is found in the plastid. The protein localises to the chloroplast. It localises to the amyloplast. It catalyses the reaction alpha-D-glucose 1-phosphate + ATP + H(+) = ADP-alpha-D-glucose + diphosphate. The protein operates within glycan biosynthesis; starch biosynthesis. Its activity is regulated as follows. Insensitive to 3'phosphoglycerate and orthophosphate. This protein plays a role in synthesis of starch. It catalyzes the synthesis of the activated glycosyl donor, ADP-glucose from Glc-1-P and ATP. The protein is Glucose-1-phosphate adenylyltransferase small subunit, chloroplastic/amyloplastic (AGP-S) of Triticum aestivum (Wheat).